The following is a 598-amino-acid chain: Arginine--tRNA ligase (598 aa).

Residues 131 to 141 (ANPTGPMHVGH) carry the 'HIGH' region motif. Residues 288 to 309 (KLPPPKSKKGQPPPQAQPDEEG) are disordered.

The protein belongs to the class-I aminoacyl-tRNA synthetase family. In terms of assembly, monomer.

It localises to the cytoplasm. The catalysed reaction is tRNA(Arg) + L-arginine + ATP = L-arginyl-tRNA(Arg) + AMP + diphosphate. The sequence is that of Arginine--tRNA ligase from Anaeromyxobacter dehalogenans (strain 2CP-C).